The chain runs to 436 residues: Nucleolar protein 4-like (436 aa).

Positions 1-184 (MSDSTWMSAD…KMNDSEGMDP (184 aa)) are disordered. Positions 41–61 (SESGSGNGSSTLNPSTSSSTQ) are enriched in low complexity. A Phosphoserine modification is found at Ser130. Acidic residues predominate over residues 160-169 (ADDDDDDHDD). Residues 170 to 184 (HEDNDKMNDSEGMDP) are compositionally biased toward basic and acidic residues. A Phosphoserine modification is found at Ser295. Residues 351–366 (QPPASLQTGNHSNGPT) show a composition bias toward polar residues. Residues 351–400 (QPPASLQTGNHSNGPTDLSMKGGASTTSTTPTPTPSSTSTSRPVPTAQLS) form a disordered region. Low complexity predominate over residues 375-396 (STTSTTPTPTPSSTSTSRPVPT).

This is Nucleolar protein 4-like (NOL4L) from Homo sapiens (Human).